Consider the following 334-residue polypeptide: Probable allantoicase (334 aa).

The protein belongs to the allantoicase family.

The enzyme catalyses allantoate + H2O = (S)-ureidoglycolate + urea. The protein operates within nitrogen metabolism; (S)-allantoin degradation; (S)-ureidoglycolate from allantoate (aminidohydrolase route): step 1/1. This chain is Probable allantoicase, found in Acinetobacter baylyi (strain ATCC 33305 / BD413 / ADP1).